The primary structure comprises 696 residues: D-(-)-3-hydroxybutyrate oligomer hydrolase (696 aa).

The signal sequence occupies residues 1–26 (MDTHGWGSRILVGAALAALTMLGACN). S309 serves as the catalytic Charge relay system.

Belongs to the D-(-)-3-hydroxybutyrate oligomer hydrolase family.

The protein resides in the secreted. The enzyme catalyses (3R)-hydroxybutanoate dimer + H2O = 2 (R)-3-hydroxybutanoate + H(+). Its pathway is lipid metabolism; butanoate metabolism. Participates in the degradation of poly-3-hydroxybutyrate (PHB). It works downstream of poly(3-hydroxybutyrate) depolymerase, hydrolyzing D(-)-3-hydroxybutyrate oligomers of various length (3HB-oligomers) into 3HB-monomers. This is D-(-)-3-hydroxybutyrate oligomer hydrolase from Burkholderia vietnamiensis (strain G4 / LMG 22486) (Burkholderia cepacia (strain R1808)).